A 711-amino-acid polypeptide reads, in one-letter code: Probable cadmium-transporting ATPase (711 aa).

The region spanning 3 to 66 (EKTVYRVDGL…AGAFEHLKII (64 aa)) is the HMA domain. Residues Cys-14 and Cys-17 each coordinate Cd(2+). 5 helical membrane-spanning segments follow: residues 89-109 (WRLL…IMNG), 111-131 (DFYL…YSLF), 151-171 (IAII…VVIL), 317-337 (TPAI…LFGG), and 347-367 (LSVL…VAIV). Asp-398 serves as the catalytic 4-aspartylphosphate intermediate. The helical transmembrane segment at 669–689 (VIKLIALLLVIPGWLTLWIAI) threads the bilayer.

It belongs to the cation transport ATPase (P-type) (TC 3.A.3) family. Type IB subfamily.

It localises to the cell membrane. The catalysed reaction is Cd(2+)(in) + ATP + H2O = Cd(2+)(out) + ADP + phosphate + H(+). Its function is as follows. Couples the hydrolysis of ATP with the export of cadmium. In Listeria monocytogenes, this protein is Probable cadmium-transporting ATPase (cadA).